The following is a 270-amino-acid chain: Very long chain fatty acid elongase 3 (270 aa).

An N-linked (GlcNAc...) asparagine glycan is attached at Asn-6. A run of 2 helical transmembrane segments spans residues 29 to 49 and 63 to 83; these read FFEE…VLIA and LQGP…LGAV. Asn-110 is a glycosylation site (N-linked (GlcNAc...) asparagine). 5 helical membrane-spanning segments follow: residues 115-135, 140-160, 164-184, 198-218, and 235-255; these read FWSW…AFII, PLIF…SFGY, VPAG…MYTY, LPML…IVSI, and HLFW…HFFC. The short motif at 266-270 is the Di-lysine motif element; sequence KTKSQ.

The protein belongs to the ELO family. ELOVL3 subfamily. As to quaternary structure, interacts with TECR. N-Glycosylated. In terms of tissue distribution, testis.

The protein resides in the endoplasmic reticulum membrane. It catalyses the reaction a very-long-chain acyl-CoA + malonyl-CoA + H(+) = a very-long-chain 3-oxoacyl-CoA + CO2 + CoA. The enzyme catalyses eicosanoyl-CoA + malonyl-CoA + H(+) = 3-oxodocosanoyl-CoA + CO2 + CoA. The catalysed reaction is hexadecanoyl-CoA + malonyl-CoA + H(+) = 3-oxooctadecanoyl-CoA + CO2 + CoA. It carries out the reaction octadecanoyl-CoA + malonyl-CoA + H(+) = 3-oxoeicosanoyl-CoA + CO2 + CoA. It catalyses the reaction (9Z)-octadecenoyl-CoA + malonyl-CoA + H(+) = 3-oxo-(11Z)-eicosenoyl-CoA + CO2 + CoA. The enzyme catalyses (9Z,12Z)-octadecadienoyl-CoA + malonyl-CoA + H(+) = (11Z,14Z)-3-oxoicosa-11,14-dienoyl-CoA + CO2 + CoA. The catalysed reaction is (9Z,12Z,15Z)-octadecatrienoyl-CoA + malonyl-CoA + H(+) = (11Z,14Z,17Z)-3-oxoeicosatrienoyl-CoA + CO2 + CoA. It carries out the reaction docosanoyl-CoA + malonyl-CoA + H(+) = 3-oxotetracosanoyl-CoA + CO2 + CoA. It catalyses the reaction tetradecanoyl-CoA + malonyl-CoA + H(+) = 3-oxohexadecanoyl-CoA + CO2 + CoA. It participates in lipid metabolism; polyunsaturated fatty acid biosynthesis. Catalyzes the first and rate-limiting reaction of the four reactions that constitute the long-chain fatty acids elongation cycle. This endoplasmic reticulum-bound enzymatic process allows the addition of 2 carbons to the chain of long- and very long-chain fatty acids (VLCFAs) per cycle. Condensing enzyme that exhibits activity toward saturated and unsaturated acyl-CoA substrates with higher activity toward C18 acyl-CoAs, especially C18:0 acyl-CoAs. May participate in the production of saturated and monounsaturated VLCFAs of different chain lengths that are involved in multiple biological processes as precursors of membrane lipids and lipid mediators. The polypeptide is Very long chain fatty acid elongase 3 (Homo sapiens (Human)).